Reading from the N-terminus, the 314-residue chain is uncharacterized protein (314 aa).

This is an uncharacterized protein from Acanthamoeba polyphaga mimivirus (APMV).